The sequence spans 422 residues: UDP-N-acetylglucosamine 1-carboxyvinyltransferase (422 aa).

22–23 (KN) is a phosphoenolpyruvate binding site. Residue R95 coordinates UDP-N-acetyl-alpha-D-glucosamine. The active-site Proton donor is the C119. Residue C119 is modified to 2-(S-cysteinyl)pyruvic acid O-phosphothioketal. UDP-N-acetyl-alpha-D-glucosamine contacts are provided by residues 124 to 128 (RPIDQ), D309, and V331.

The protein belongs to the EPSP synthase family. MurA subfamily.

Its subcellular location is the cytoplasm. It catalyses the reaction phosphoenolpyruvate + UDP-N-acetyl-alpha-D-glucosamine = UDP-N-acetyl-3-O-(1-carboxyvinyl)-alpha-D-glucosamine + phosphate. It functions in the pathway cell wall biogenesis; peptidoglycan biosynthesis. Cell wall formation. Adds enolpyruvyl to UDP-N-acetylglucosamine. This chain is UDP-N-acetylglucosamine 1-carboxyvinyltransferase, found in Anaeromyxobacter sp. (strain K).